The chain runs to 146 residues: uncharacterized protein (146 aa).

2 consecutive transmembrane segments (helical) span residues 89 to 111 (AIEM…LLLY) and 121 to 143 (IGCG…YSVV).

The protein localises to the cell membrane. This is an uncharacterized protein from Archaeoglobus fulgidus (strain ATCC 49558 / DSM 4304 / JCM 9628 / NBRC 100126 / VC-16).